Consider the following 431-residue polypeptide: Glucose-1-phosphate adenylyltransferase (431 aa).

Lys-39 contributes to the beta-D-fructose 1,6-bisphosphate binding site. AMP-binding residues include Arg-40, His-46, and Arg-52. Position 114 (Tyr-114) interacts with alpha-D-glucose 1-phosphate. Residue Arg-130 coordinates AMP. Alpha-D-glucose 1-phosphate contacts are provided by residues Gly-179, 194–195 (EK), and Ser-212. 2 residues coordinate AMP: Glu-370 and Arg-386. Beta-D-fructose 1,6-bisphosphate-binding positions include 419–423 (REMLR) and 429–431 (QER).

The protein belongs to the bacterial/plant glucose-1-phosphate adenylyltransferase family. Homotetramer.

The enzyme catalyses alpha-D-glucose 1-phosphate + ATP + H(+) = ADP-alpha-D-glucose + diphosphate. It functions in the pathway glycan biosynthesis; glycogen biosynthesis. Its activity is regulated as follows. Allosterically activated by fructose-1,6-bisphosphate (F16BP) and inhibited by AMP. In terms of biological role, involved in the biosynthesis of ADP-glucose, a building block required for the elongation reactions to produce glycogen. Catalyzes the reaction between ATP and alpha-D-glucose 1-phosphate (G1P) to produce pyrophosphate and ADP-Glc. The chain is Glucose-1-phosphate adenylyltransferase from Salmonella paratyphi A (strain ATCC 9150 / SARB42).